Reading from the N-terminus, the 127-residue chain is Aspartate 1-decarboxylase (127 aa).

The active-site Schiff-base intermediate with substrate; via pyruvic acid is the serine 25. At serine 25 the chain carries Pyruvic acid (Ser). Threonine 57 provides a ligand contact to substrate. Tyrosine 58 serves as the catalytic Proton donor. 73-75 is a binding site for substrate; the sequence is GSA.

The protein belongs to the PanD family. Heterooctamer of four alpha and four beta subunits. Requires pyruvate as cofactor. In terms of processing, is synthesized initially as an inactive proenzyme, which is activated by self-cleavage at a specific serine bond to produce a beta-subunit with a hydroxyl group at its C-terminus and an alpha-subunit with a pyruvoyl group at its N-terminus.

It is found in the cytoplasm. The enzyme catalyses L-aspartate + H(+) = beta-alanine + CO2. Its pathway is cofactor biosynthesis; (R)-pantothenate biosynthesis; beta-alanine from L-aspartate: step 1/1. Catalyzes the pyruvoyl-dependent decarboxylation of aspartate to produce beta-alanine. The protein is Aspartate 1-decarboxylase of Laribacter hongkongensis (strain HLHK9).